The chain runs to 120 residues: MNAEAIIRSIEAEQLKDDLPTIHVGDTVRVGVKIKEGTKERVQPYEGTVIAMRNGGINETITVRKIFQGIGVERVFLLHSPLVDNIKVIRRGKVRRAKLYYLRDRVGKATRIKQRFDRPI.

It belongs to the bacterial ribosomal protein bL19 family.

In terms of biological role, this protein is located at the 30S-50S ribosomal subunit interface and may play a role in the structure and function of the aminoacyl-tRNA binding site. This chain is Large ribosomal subunit protein bL19, found in Picosynechococcus sp. (strain ATCC 27264 / PCC 7002 / PR-6) (Agmenellum quadruplicatum).